Consider the following 248-residue polypeptide: Positive alginate biosynthesis regulatory protein (248 aa).

Residues 2 to 117 (NVLIVDDEPL…DLAEALKKAS (116 aa)) enclose the Response regulatory domain. Asp-54 bears the 4-aspartylphosphate mark. In terms of domain architecture, HTH LytTR-type spans 142 to 247 (ISARTRKGIE…VAGVRRLMHQ (106 aa)).

It functions in the pathway glycan biosynthesis; alginate biosynthesis [regulation]. Functionally, positive regulator of the algD gene, which codes for a GDP-mannose dehydrogenase, a key step enzyme in the alginate biosynthesis pathway. This is Positive alginate biosynthesis regulatory protein (algR) from Pseudomonas aeruginosa (strain ATCC 15692 / DSM 22644 / CIP 104116 / JCM 14847 / LMG 12228 / 1C / PRS 101 / PAO1).